We begin with the raw amino-acid sequence, 82 residues long: UPF0154 protein SPD_1662 (82 aa).

The helical transmembrane segment at 5-25 (LAIVLIVLAFLGGALGGMYLV) threads the bilayer.

The protein belongs to the UPF0154 family.

The protein localises to the cell membrane. In Streptococcus pneumoniae serotype 2 (strain D39 / NCTC 7466), this protein is UPF0154 protein SPD_1662.